The following is a 100-amino-acid chain: Small ribosomal subunit protein uS14c (100 aa).

Belongs to the universal ribosomal protein uS14 family. In terms of assembly, component of the chloroplast small ribosomal subunit (SSU). Mature 70S chloroplast ribosomes of higher plants consist of a small (30S) and a large (50S) subunit. The 30S small subunit contains 1 molecule of ribosomal RNA (16S rRNA) and 24 different proteins. The 50S large subunit contains 3 rRNA molecules (23S, 5S and 4.5S rRNA) and 33 different proteins.

It is found in the plastid. Its subcellular location is the chloroplast. Component of the chloroplast ribosome (chloro-ribosome), a dedicated translation machinery responsible for the synthesis of chloroplast genome-encoded proteins, including proteins of the transcription and translation machinery and components of the photosynthetic apparatus. In Spinacia oleracea (Spinach), this protein is Small ribosomal subunit protein uS14c.